Here is a 961-residue protein sequence, read N- to C-terminus: Glycine dehydrogenase (decarboxylating) (961 aa).

At Lys709 the chain carries N6-(pyridoxal phosphate)lysine.

This sequence belongs to the GcvP family. The glycine cleavage system is composed of four proteins: P, T, L and H. It depends on pyridoxal 5'-phosphate as a cofactor.

The catalysed reaction is N(6)-[(R)-lipoyl]-L-lysyl-[glycine-cleavage complex H protein] + glycine + H(+) = N(6)-[(R)-S(8)-aminomethyldihydrolipoyl]-L-lysyl-[glycine-cleavage complex H protein] + CO2. Its function is as follows. The glycine cleavage system catalyzes the degradation of glycine. The P protein binds the alpha-amino group of glycine through its pyridoxal phosphate cofactor; CO(2) is released and the remaining methylamine moiety is then transferred to the lipoamide cofactor of the H protein. The sequence is that of Glycine dehydrogenase (decarboxylating) from Streptomyces griseus subsp. griseus (strain JCM 4626 / CBS 651.72 / NBRC 13350 / KCC S-0626 / ISP 5235).